Consider the following 454-residue polypeptide: tRNA modification GTPase MnmE (454 aa).

(6S)-5-formyl-5,6,7,8-tetrahydrofolate contacts are provided by Arg23, Glu80, and Lys120. The TrmE-type G domain maps to 216 to 377 (GMKVVIAGRP…LRNHLKQSMG (162 aa)). K(+) is bound at residue Asn226. GTP contacts are provided by residues 226–231 (NAGKSS), 245–251 (TDIAGTT), 270–273 (DTAG), 335–338 (NKAD), and 358–360 (SAR). Position 230 (Ser230) interacts with Mg(2+). The K(+) site is built by Thr245, Ile247, and Thr250. Residue Thr251 coordinates Mg(2+). Position 454 (Lys454) interacts with (6S)-5-formyl-5,6,7,8-tetrahydrofolate.

Belongs to the TRAFAC class TrmE-Era-EngA-EngB-Septin-like GTPase superfamily. TrmE GTPase family. Homodimer. Heterotetramer of two MnmE and two MnmG subunits. K(+) serves as cofactor.

The protein localises to the cytoplasm. In terms of biological role, exhibits a very high intrinsic GTPase hydrolysis rate. Involved in the addition of a carboxymethylaminomethyl (cmnm) group at the wobble position (U34) of certain tRNAs, forming tRNA-cmnm(5)s(2)U34. This chain is tRNA modification GTPase MnmE, found in Shigella flexneri serotype 5b (strain 8401).